An 87-amino-acid chain; its full sequence is UPF0250 protein BCc_307 (87 aa).

Belongs to the UPF0250 family.

This is UPF0250 protein BCc_307 from Buchnera aphidicola subsp. Cinara cedri (strain Cc).